A 357-amino-acid polypeptide reads, in one-letter code: N-acetyl-gamma-glutamyl-phosphate reductase (357 aa).

The active site involves cysteine 160.

The protein belongs to the NAGSA dehydrogenase family. Type 1 subfamily.

It localises to the cytoplasm. It catalyses the reaction N-acetyl-L-glutamate 5-semialdehyde + phosphate + NADP(+) = N-acetyl-L-glutamyl 5-phosphate + NADPH + H(+). The protein operates within amino-acid biosynthesis; L-arginine biosynthesis; N(2)-acetyl-L-ornithine from L-glutamate: step 3/4. In terms of biological role, catalyzes the NADPH-dependent reduction of N-acetyl-5-glutamyl phosphate to yield N-acetyl-L-glutamate 5-semialdehyde. This Synechococcus sp. (strain CC9605) protein is N-acetyl-gamma-glutamyl-phosphate reductase.